A 199-amino-acid polypeptide reads, in one-letter code: Early activation antigen CD69 (199 aa).

Residues 1-29 (MSSENCFVAENSSLHPESGQENDATSPHF) form a disordered region. Over 1-40 (MSSENCFVAENSSLHPESGQENDATSPHFSTRHEGSFQVP) the chain is Cytoplasmic. Residues 41-61 (VLCAVMNVVFITILIIALIAL) form a helical; Signal-anchor for type II membrane protein membrane-spanning segment. Residues 62 to 199 (SVGQYNCPGQ…LYWICNKPYK (138 aa)) lie on the Extracellular side of the membrane. Intrachain disulfides connect cysteine 85–cysteine 96, cysteine 113–cysteine 194, and cysteine 173–cysteine 186. In terms of domain architecture, C-type lectin spans 92 to 195 (YQRKCYFIST…CEKNLYWICN (104 aa)). Asparagine 166 carries an N-linked (GlcNAc...) asparagine glycan.

Homodimer; disulfide-linked. Interacts with S100A8 and S100A9. Interacts with galactin-1/LGALS1. Interacts with S1PR1; this interaction mediates S1PR1 degradation. Constitutive Ser/Thr phosphorylation in both mature thymocytes and activated T-lymphocytes. Expressed on the surface of activated T-cells, B-cells, natural killer cells, neutrophils, eosinophils, epidermal Langerhans cells and platelets.

The protein resides in the cell membrane. In terms of biological role, transmembrane protein expressed mainly on T-cells resident in mucosa that plays an essential role in immune cell homeostasis. Rapidly expressed on the surface of platelets, T-lymphocytes and NK cells upon activation by various stimuli, such as antigen recognition or cytokine signaling, stimulates different signaling pathways in different cell types. Negatively regulates Th17 cell differentiation through its carbohydrate dependent interaction with galectin-1/LGALS1 present on immature dendritic cells. Association of CD69 cytoplasmic tail with the JAK3/STAT5 signaling pathway regulates the transcription of RORgamma/RORC and, consequently, differentiation toward the Th17 lineage. Also acts via the S100A8/S100A9 complex present on peripheral blood mononuclear cells to promote the conversion of naive CD4 T-cells into regulatory T-cells. Acts as an oxidized low-density lipoprotein (oxLDL) receptor in CD4 T-lymphocytes and negatively regulates the inflammatory response by inducing the expression of PDCD1 through the activation of NFAT. Participates in adipose tissue-derived mesenchymal stem cells (ASCs)-mediated protection against P.aeruginosa infection. Mechanistically, specifically recognizes P.aeruginosa to promote ERK1 activation, followed by granulocyte-macrophage colony-stimulating factor (GM-CSF) and other inflammatory cytokines secretion. In eosinophils, induces IL-10 production through the ERK1/2 pathway. Negatively regulates the chemotactic responses of effector lymphocytes and dendritic cells (DCs) to sphingosine 1 phosphate/S1P by acting as a S1PR1 receptor agonist and facilitating the internalization and degradation of the receptor. This Homo sapiens (Human) protein is Early activation antigen CD69 (CD69).